The sequence spans 877 residues: Clumping factor B (877 aa).

An N-terminal signal peptide occupies residues 1-44 (MKKRIDYLSNKQNKYSIRRFTVGTTSVIVGATILFGIGNHQAQA). The short motif at 15-26 (YSIRRFTVGTTS) is the YSIRK-G/S signaling motif element. Polar residues-rich tracts occupy residues 44-61 (ASEQSNDTTQSSKNNASA) and 68-95 (MIETPQLNTTANDTSDISANTNSANVDS). The tract at residues 44–192 (ASEQSNDTTQ…QGTSKPSVRT (149 aa)) is disordered. Residues 45 to 542 (SEQSNDTTQS…GSADGDSAVN (498 aa)) are ligand binding A region. Over residues 96–119 (TTKPMSTQTSNTTTTEPASTNETP) the composition is skewed to low complexity. Residues 120-189 (QPTAIKNQAT…SNAQGTSKPS (70 aa)) are compositionally biased toward polar residues. Positions 272–276 (DYSNS) match the MIDAS-like motif motif. Residues 530-849 (YGGGSADGDS…ETGDKSENTN (320 aa)) are disordered. Over residues 545–555 (DPTPGPPVDPE) the composition is skewed to pro residues. The span at 556 to 801 (PSPDPEPEPT…SDSDSDSDSD (246 aa)) shows a compositional bias: acidic residues. Over residues 805 to 816 (RVTPPNNEQKAP) the composition is skewed to polar residues. Positions 833–846 (HKTDALPETGDKSE) are enriched in basic and acidic residues. The LPXTG sorting signal signature appears at 838-842 (LPETG). Position 841 is a pentaglycyl murein peptidoglycan amidated threonine (threonine 841). Positions 842–877 (GDKSENTNATLFGAMMALLGSLLLFRKRKQDHKEKA) are cleaved as a propeptide — removed by sortase.

It belongs to the serine-aspartate repeat-containing protein (SDr) family. Post-translationally, proteolytically cleaved by aureolysin (aur). This cleavage leads to the inactivation of ClfB.

It is found in the secreted. The protein resides in the cell wall. Functionally, cell surface-associated protein implicated in virulence by promoting bacterial attachment to both alpha- and beta-chains of human fibrinogen and inducing the formation of bacterial clumps. This Staphylococcus aureus (strain Mu50 / ATCC 700699) protein is Clumping factor B (clfB).